The sequence spans 302 residues: Phospho-N-acetylmuramoyl-pentapeptide-transferase (302 aa).

The next 10 helical transmembrane spans lie at 1-21 (MIAASFLLNLLIYPFLINLFR), 42-62 (GTPTMGGILFVLIGLLFGVLS), 67-87 (VILTGAFLFFLIGFLDDFLSI), 101-121 (ALLQIAAASVVIAFSQPETAV), 123-143 (FFGIKLEMGAWYYLLALIVIV), 154-174 (GLDGLAGWVYISGAIPYWFFL), 178-198 (GFSENIIILLSAGVLAFLIFN), 204-224 (IFMGDTGSIALGGTLGVVSVL), 229-249 (FYLIVFFPILVVETLSVILQI), and 279-299 (IVAVFTIFNLISSLIALEVFG).

This sequence belongs to the glycosyltransferase 4 family. MraY subfamily. Requires Mg(2+) as cofactor.

The protein resides in the cell inner membrane. The catalysed reaction is UDP-N-acetyl-alpha-D-muramoyl-L-alanyl-gamma-D-glutamyl-meso-2,6-diaminopimeloyl-D-alanyl-D-alanine + di-trans,octa-cis-undecaprenyl phosphate = di-trans,octa-cis-undecaprenyl diphospho-N-acetyl-alpha-D-muramoyl-L-alanyl-D-glutamyl-meso-2,6-diaminopimeloyl-D-alanyl-D-alanine + UMP. It participates in cell wall biogenesis; peptidoglycan biosynthesis. Catalyzes the initial step of the lipid cycle reactions in the biosynthesis of the cell wall peptidoglycan: transfers peptidoglycan precursor phospho-MurNAc-pentapeptide from UDP-MurNAc-pentapeptide onto the lipid carrier undecaprenyl phosphate, yielding undecaprenyl-pyrophosphoryl-MurNAc-pentapeptide, known as lipid I. This chain is Phospho-N-acetylmuramoyl-pentapeptide-transferase, found in Thermotoga neapolitana (strain ATCC 49049 / DSM 4359 / NBRC 107923 / NS-E).